Here is an 879-residue protein sequence, read N- to C-terminus: Valine--tRNA ligase (879 aa).

The 'HIGH' region motif lies at 45–55 (PNVTGKLHLGH). The 'KMSKS' region motif lies at 521 to 525 (KMSKS). K524 is an ATP binding site. Residues 806–879 (LTELVNVDEE…ERIQDLKESK (74 aa)) adopt a coiled-coil conformation.

It belongs to the class-I aminoacyl-tRNA synthetase family. ValS type 1 subfamily. As to quaternary structure, monomer.

Its subcellular location is the cytoplasm. The enzyme catalyses tRNA(Val) + L-valine + ATP = L-valyl-tRNA(Val) + AMP + diphosphate. Catalyzes the attachment of valine to tRNA(Val). As ValRS can inadvertently accommodate and process structurally similar amino acids such as threonine, to avoid such errors, it has a 'posttransfer' editing activity that hydrolyzes mischarged Thr-tRNA(Val) in a tRNA-dependent manner. This chain is Valine--tRNA ligase, found in Lactobacillus acidophilus (strain ATCC 700396 / NCK56 / N2 / NCFM).